The sequence spans 746 residues: F-box only protein 30 (746 aa).

The TRAF-type zinc-finger motif lies at 49–110 (EHRLLCPFER…SYSDRKSYES (62 aa)). 2 disordered regions span residues 222–241 (MDEE…DQDH) and 247–266 (IGAV…QAEQ). The span at 225-241 (ENNKESFQDKNLKDQDH) shows a compositional bias: basic and acidic residues. The segment covering 256-266 (SGTSQNAQAEQ) has biased composition (polar residues). Residue Ser383 is modified to Phosphoserine. Residues 611-659 (SDHLSSLPFEVLQHIAGFLDGFSLCQLACVSRLMRDVCGSLLQSRGMVI) enclose the F-box domain.

In terms of assembly, part of a SCF (SKP1-cullin-F-box) protein ligase complex. Interacts with SKP1, CUL1 and RBX1/ROC1. In terms of processing, auto-ubiquitinated. Post-translationally, may be neddylated. Neddylation may be required for E3 ligase activity, since it was observed only after purification with o-phenanthroline.

It functions in the pathway protein modification; protein ubiquitination. In terms of biological role, substrate-recognition component of the SCF (SKP1-CUL1-F-box protein)-type E3 ubiquitin ligase complex. Required for muscle atrophy following denervation. This Mus musculus (Mouse) protein is F-box only protein 30 (Fbxo30).